A 680-amino-acid polypeptide reads, in one-letter code: UvrABC system protein C (680 aa).

The region spanning 66–144 (NSPGVYRMFN…IKRLRPRFNV (79 aa)) is the GIY-YIG domain. Residues 254-289 (QKVKSHMAEAMNQAAEDLDFERAAIYRDRLAALSHV) enclose the UVR domain.

It belongs to the UvrC family. In terms of assembly, interacts with UvrB in an incision complex.

The protein localises to the cytoplasm. In terms of biological role, the UvrABC repair system catalyzes the recognition and processing of DNA lesions. UvrC both incises the 5' and 3' sides of the lesion. The N-terminal half is responsible for the 3' incision and the C-terminal half is responsible for the 5' incision. The sequence is that of UvrABC system protein C from Rhizobium johnstonii (strain DSM 114642 / LMG 32736 / 3841) (Rhizobium leguminosarum bv. viciae).